The sequence spans 185 residues: MAKAGYQPRLKKHYEEAIRKQLLETFKYENEMQVPRIDKVVINMGVGEATGDSKKPSVAAEDLALIAGQKAVITRARNSIAGFKVREGMPIGAKVTLRKDRMYEFLDRLVNVALPRVRDFRGLSPKSFDGHGNFAMGIKEHIVFPEINYDKVDQIWGMDIIVCTTAKTDDEARALLKAFNFPFRQ.

This sequence belongs to the universal ribosomal protein uL5 family. In terms of assembly, part of the 50S ribosomal subunit; part of the 5S rRNA/L5/L18/L25 subcomplex. Contacts the 5S rRNA and the P site tRNA. Forms a bridge to the 30S subunit in the 70S ribosome.

Its function is as follows. This is one of the proteins that bind and probably mediate the attachment of the 5S RNA into the large ribosomal subunit, where it forms part of the central protuberance. In the 70S ribosome it contacts protein S13 of the 30S subunit (bridge B1b), connecting the 2 subunits; this bridge is implicated in subunit movement. Contacts the P site tRNA; the 5S rRNA and some of its associated proteins might help stabilize positioning of ribosome-bound tRNAs. The polypeptide is Large ribosomal subunit protein uL5 (Chelativorans sp. (strain BNC1)).